A 299-amino-acid chain; its full sequence is Taste receptor type 2 member 50 (299 aa).

M1 is a topological domain (extracellular). The chain crosses the membrane as a helical span at residues 2–22 (ITFLYIFFSILILVLFVLGNF). The Cytoplasmic segment spans residues 23–55 (ANGFIALVNFIDWVKRKKISSADQILTALAVSR). The helical transmembrane segment at 56-76 (IGLLWALLLNWYLTVLNPAFY) threads the bilayer. Residues 77–87 (SVELRITSYNA) lie on the Extracellular side of the membrane. The chain crosses the membrane as a helical span at residues 88 to 108 (WVVTNHFSMWLAASLSIFYLL). Residues 109-126 (KIANFSNLIFLHLKRRVR) lie on the Cytoplasmic side of the membrane. A helical membrane pass occupies residues 127–147 (SVILVILLGTLIFLVCHLLVA). Residues 148–181 (NMDESMWAEEYEGNMTGKMKLRNTVHLSYLTVTT) are Extracellular-facing. Residue N161 is glycosylated (N-linked (GlcNAc...) asparagine). Residues 182–202 (LWSFIPFTLSLISFLMLICSL) traverse the membrane as a helical segment. At 203 to 229 (CKHLKKMQLHGEGSQDLSTKVHIKALQ) the chain is on the cytoplasmic side. The helical transmembrane segment at 230 to 250 (TLISFLLLCAIFFLFLIISVW) threads the bilayer. At 251–259 (SPRRLQNDP) the chain is on the extracellular side. The helical transmembrane segment at 260–280 (VVMVSKAVGNIYLAFDSFILI) threads the bilayer. Topologically, residues 281 to 299 (WRTKKLKHTFLLILCQIRC) are cytoplasmic.

Belongs to the G-protein coupled receptor T2R family.

It localises to the membrane. Functionally, receptor that may play a role in the perception of bitterness and is gustducin-linked. May play a role in sensing the chemical composition of the gastrointestinal content. The activity of this receptor may stimulate alpha gustducin, mediate PLC-beta-2 activation and lead to the gating of TRPM5. The sequence is that of Taste receptor type 2 member 50 (TAS2R50) from Gorilla gorilla gorilla (Western lowland gorilla).